A 469-amino-acid polypeptide reads, in one-letter code: Calcium-binding mitochondrial carrier protein SCaMC-2-B (469 aa).

At 1 to 189 (MLCLCLYVPV…EKNTGMWWRH (189 aa)) the chain is on the mitochondrial intermembrane side. 3 consecutive EF-hand domains span residues 47-80 (SYRK…RDHE), 78-113 (DHEK…LGVH), and 114-149 (ISEE…HPAE). Ca(2+)-binding residues include Asp60, Asp62, Asp64, Gln66, and Glu71. Solcar repeat units follow at residues 184-270 (GMWW…IKRL), 278-363 (LGIL…LKNS), and 375-463 (PGVF…LKIT). The chain crosses the membrane as a helical span at residues 190–207 (LVAGGGAGAVSRTCTAPL). The Mitochondrial matrix segment spans residues 208-244 (DRLKVLMQVHATRSNSMGIAGGFTQMIREGGLRSLWR). A helical transmembrane segment spans residues 245-264 (GNGINVLKIAPESAIKFMAY). Residues 265–287 (EQIKRLIGSNQETLGILERLVSG) are Mitochondrial intermembrane-facing. A helical membrane pass occupies residues 288–301 (SLAGAIAQSSIYPM). The Mitochondrial matrix segment spans residues 302-337 (EVLKTRLALGRTGQYSGIADCAKHIFKKEGMTAFYK). A helical membrane pass occupies residues 338-357 (GYIPNMLGIIPYAGIDLAVY). At 358 to 380 (ETLKNSWLQRFATDSADPGVFVL) the chain is on the mitochondrial intermembrane side. A helical membrane pass occupies residues 381–398 (LACGTMSSTCGQLASYPL). The Mitochondrial matrix portion of the chain corresponds to 399–437 (ALVRTRMQAQASQEGSPQMTMSGLFRHIVRTEGAIGLYR). A helical transmembrane segment spans residues 438-457 (GLAPNFMKVIPAVSISYVVY). The Mitochondrial intermembrane segment spans residues 458–469 (ENLKITLGVQSR).

It belongs to the mitochondrial carrier (TC 2.A.29) family.

It localises to the mitochondrion inner membrane. Functionally, calcium-dependent mitochondrial solute carrier. The protein is Calcium-binding mitochondrial carrier protein SCaMC-2-B (slc25a25b) of Danio rerio (Zebrafish).